The chain runs to 350 residues: Phenylalanine--tRNA ligase alpha subunit (350 aa).

Residue Glu271 coordinates Mg(2+).

Belongs to the class-II aminoacyl-tRNA synthetase family. Phe-tRNA synthetase alpha subunit type 1 subfamily. As to quaternary structure, tetramer of two alpha and two beta subunits. Mg(2+) serves as cofactor.

The protein localises to the cytoplasm. It carries out the reaction tRNA(Phe) + L-phenylalanine + ATP = L-phenylalanyl-tRNA(Phe) + AMP + diphosphate + H(+). In Paracidovorax citrulli (strain AAC00-1) (Acidovorax citrulli), this protein is Phenylalanine--tRNA ligase alpha subunit.